Reading from the N-terminus, the 261-residue chain is HLA class II histocompatibility antigen, DQ beta 1 chain (261 aa).

A signal peptide spans 1-32; it reads MSWKKALRIPGGLRAATVTLMLAMLSTPVAEG. The segment at 33-126 is beta-1; the sequence is RDSPEDFVYQ…LELRTTLQRR (94 aa). The Extracellular segment spans residues 33–230; sequence RDSPEDFVYQ…RAQSESAQSK (198 aa). 2 disulfides stabilise this stretch: cysteine 47–cysteine 111 and cysteine 149–cysteine 205. An N-linked (GlcNAc...) asparagine glycan is attached at asparagine 51. The segment at 127–220 is beta-2; sequence VEPTVTISPS…SLQNPITVEW (94 aa). An Ig-like C1-type domain is found at 129–217; it reads PTVTISPSRT…EHPSLQNPIT (89 aa). The interval 221–230 is connecting peptide; that stretch reads RAQSESAQSK. The chain crosses the membrane as a helical span at residues 231 to 251; that stretch reads MLSGIGGFVLGLIFLGLGLII. The Cytoplasmic portion of the chain corresponds to 252–261; sequence HHRSQKGLLH.

The protein belongs to the MHC class II family. In terms of assembly, heterodimer of an alpha and a beta subunit; also referred as MHC class II molecule. In the endoplasmic reticulum (ER) it forms a heterononamer; 3 MHC class II molecules bind to a CD74 homotrimer (also known as invariant chain or HLA class II histocompatibility antigen gamma chain). In the endosomal/lysosomal system; CD74 undergoes sequential degradation by various proteases; leaving a small fragment termed CLIP on each MHC class II molecule. MHC class II molecule interacts with HLA_DM, and HLA_DO in B-cells, in order to release CLIP and facilitate the binding of antigenic peptides.

The protein localises to the cell membrane. The protein resides in the endoplasmic reticulum membrane. It is found in the golgi apparatus. It localises to the trans-Golgi network membrane. Its subcellular location is the endosome membrane. The protein localises to the lysosome membrane. Functionally, binds peptides derived from antigens that access the endocytic route of antigen presenting cells (APC) and presents them on the cell surface for recognition by the CD4 T-cells. The peptide binding cleft accommodates peptides of 10-30 residues. The peptides presented by MHC class II molecules are generated mostly by degradation of proteins that access the endocytic route, where they are processed by lysosomal proteases and other hydrolases. Exogenous antigens that have been endocytosed by the APC are thus readily available for presentation via MHC II molecules, and for this reason this antigen presentation pathway is usually referred to as exogenous. As membrane proteins on their way to degradation in lysosomes as part of their normal turn-over are also contained in the endosomal/lysosomal compartments, exogenous antigens must compete with those derived from endogenous components. Autophagy is also a source of endogenous peptides, autophagosomes constitutively fuse with MHC class II loading compartments. In addition to APCs, other cells of the gastrointestinal tract, such as epithelial cells, express MHC class II molecules and CD74 and act as APCs, which is an unusual trait of the GI tract. To produce a MHC class II molecule that presents an antigen, three MHC class II molecules (heterodimers of an alpha and a beta chain) associate with a CD74 trimer in the ER to form a heterononamer. Soon after the entry of this complex into the endosomal/lysosomal system where antigen processing occurs, CD74 undergoes a sequential degradation by various proteases, including CTSS and CTSL, leaving a small fragment termed CLIP (class-II-associated invariant chain peptide). The removal of CLIP is facilitated by HLA-DM via direct binding to the alpha-beta-CLIP complex so that CLIP is released. HLA-DM stabilizes MHC class II molecules until primary high affinity antigenic peptides are bound. The MHC II molecule bound to a peptide is then transported to the cell membrane surface. In B-cells, the interaction between HLA-DM and MHC class II molecules is regulated by HLA-DO. Primary dendritic cells (DCs) also to express HLA-DO. Lysosomal microenvironment has been implicated in the regulation of antigen loading into MHC II molecules, increased acidification produces increased proteolysis and efficient peptide loading. The polypeptide is HLA class II histocompatibility antigen, DQ beta 1 chain (HLA-DQB1) (Homo sapiens (Human)).